Here is a 162-residue protein sequence, read N- to C-terminus: Shikimate kinase (162 aa).

An ATP-binding site is contributed by 11 to 16 (GSGKSS). Ser15 provides a ligand contact to Mg(2+). 3 residues coordinate substrate: Asp33, Arg57, and Gly80. An ATP-binding site is contributed by Arg116. A substrate-binding site is contributed by Arg132.

The protein belongs to the shikimate kinase family. As to quaternary structure, monomer. Requires Mg(2+) as cofactor.

It localises to the cytoplasm. It carries out the reaction shikimate + ATP = 3-phosphoshikimate + ADP + H(+). The protein operates within metabolic intermediate biosynthesis; chorismate biosynthesis; chorismate from D-erythrose 4-phosphate and phosphoenolpyruvate: step 5/7. Catalyzes the specific phosphorylation of the 3-hydroxyl group of shikimic acid using ATP as a cosubstrate. The sequence is that of Shikimate kinase from Helicobacter pylori (strain G27).